The primary structure comprises 173 residues: Alpha-crystallin A chain (173 aa).

Met1 carries the N-acetylmethionine modification. The interval 1–63 (MDITIQHPWF…RTVLESGISE (63 aa)) is required for complex formation with BFSP1 and BFSP2. The residue at position 6 (Gln6) is a Deamidated glutamine; partial. Ser45 carries the post-translational modification Phosphoserine. At Gln50 the chain carries Deamidated glutamine; partial. Residues 52 to 164 (LFRTVLESGI…SDRSIPVSRE (113 aa)) enclose the sHSP domain. The residue at position 99 (Lys99) is an N6-acetyllysine. Zn(2+) contacts are provided by His100, Glu102, and His107. Ser122 is modified (phosphoserine). A Deamidated asparagine; partial modification is found at Asn123. The interval 144 to 173 (PKIHSNMESSHSDRSIPVSREEKPTLAPSS) is disordered. Residues 153 to 167 (SHSDRSIPVSREEKP) show a composition bias toward basic and acidic residues. Zn(2+) is bound at residue His154. An O-linked (GlcNAc) serine glycan is attached at Ser162.

This sequence belongs to the small heat shock protein (HSP20) family. Heteromer composed of three CRYAA and one CRYAB subunits. Inter-subunit bridging via zinc ions enhances stability, which is crucial as there is no protein turn over in the lens. Can also form homodimers and homotetramers (dimers of dimers) which serve as the building blocks of homooligomers. Within homooligomers, the zinc-binding motif is created from residues of 3 different molecules. His-100 and Glu-102 from one molecule are ligands of the zinc ion, and His-107 and His-154 residues from additional molecules complete the site with tetrahedral coordination geometry. Part of a complex required for lens intermediate filament formation composed of BFSP1, BFSP2 and CRYAA. Acetylation at Lys-99 may increase chaperone activity. In terms of processing, undergoes age-dependent proteolytical cleavage at the C-terminus.

The protein resides in the cytoplasm. It localises to the nucleus. Its function is as follows. Contributes to the transparency and refractive index of the lens. Acts as a chaperone, preventing aggregation of various proteins under a wide range of stress conditions. Required for the correct formation of lens intermediate filaments as part of a complex composed of BFSP1, BFSP2 and CRYAA. The chain is Alpha-crystallin A chain (CRYAA) from Didelphis virginiana (North American opossum).